The following is a 94-amino-acid chain: Small ribosomal subunit protein bS6 (94 aa).

The protein belongs to the bacterial ribosomal protein bS6 family.

In terms of biological role, binds together with bS18 to 16S ribosomal RNA. The sequence is that of Small ribosomal subunit protein bS6 from Akkermansia muciniphila (strain ATCC BAA-835 / DSM 22959 / JCM 33894 / BCRC 81048 / CCUG 64013 / CIP 107961 / Muc).